Consider the following 1549-residue polypeptide: ATP-binding cassette sub-family C member 9 (1549 aa).

Over 1-30 (MSLSFCGNNISSYNINDGVLQNSCFVDALN) the chain is Extracellular. Residue Asn-9 is glycosylated (N-linked (GlcNAc...) asparagine). A helical membrane pass occupies residues 31–51 (LVPHVFLLFITFPILFIGWGS). Topologically, residues 52-72 (QSSKVQIHHNTWLHFPGHNLR) are cytoplasmic. Residues 73–93 (WILTFALLFVHVCEIAEGIVS) traverse the membrane as a helical segment. Topologically, residues 94 to 101 (DSRRESRH) are extracellular. A helical transmembrane segment spans residues 102-122 (LHLFMPAVMGFVATTTSIVYY). The Cytoplasmic segment spans residues 123–132 (HNIETSNFPK). Residues 133 to 153 (LLLALFLYWVMAFITKTIKLV) traverse the membrane as a helical segment. At 154 to 167 (KYCQSGLDISNLRF) the chain is on the extracellular side. The chain crosses the membrane as a helical span at residues 168–188 (CITGMMVILNGLLMAVEINVI). The Cytoplasmic portion of the chain corresponds to 189–301 (RVRRYVFFMN…AFGRPILLSS (113 aa)). Positions 297 to 597 (ILLSSTFRYL…LSTVVRFAVK (301 aa)) constitute an ABC transmembrane type-1 1 domain. The helical transmembrane segment at 302-322 (TFRYLADLLGFAGPLCISGIV) threads the bilayer. The Extracellular portion of the chain corresponds to 323-350 (QRVNETQNGTNNTTGISETLSSKEFLEN). 4 N-linked (GlcNAc...) asparagine glycosylation sites follow: Asn-326, Asn-330, Asn-333, and Asn-334. Residues 351–371 (AYVLAVLLFLALILQRTFLQA) traverse the membrane as a helical segment. At 372–423 (SYYVTIETGINLRGALLAMIYNKILRLSTSNLSMGEMTLGQINNLVAIETNQ) the chain is on the cytoplasmic side. The helical transmembrane segment at 424–444 (LMWFLFLCPNLWAMPVQIIMG) threads the bilayer. Residues 445–455 (VILLYNLLGSS) are Extracellular-facing. The helical transmembrane segment at 456-476 (ALVGAAVIVLLAPIQYFIATK) threads the bilayer. Residues 477–531 (LAEAQKSTLDYSTERLKKTNEILKGIKLLKLYAWEHIFCKSVEETRMKELSSLKT) are Cytoplasmic-facing. Residues 532–552 (FALYTSLSIFMNAAIPIAAVL) traverse the membrane as a helical segment. The Extracellular portion of the chain corresponds to 553–571 (ATFVTHAYASGNNLKPAEA). The chain crosses the membrane as a helical span at residues 572–592 (FASLSLFHILVTPLFLLSTVV). Over 593 to 990 (RFAVKAIISV…TCWRYLTSGG (398 aa)) the chain is Cytoplasmic. The region spanning 672 to 912 (IKVTNGYFSW…DVELYEHWKT (241 aa)) is the ABC transporter 1 domain. 705–712 (GQVGCGKS) contributes to the ATP binding site. The tract at residues 944-967 (REAKAQMEDEDEEEEEEEDEDDNM) is disordered. The segment covering 951 to 966 (EDEDEEEEEEEDEDDN) has biased composition (acidic residues). The chain crosses the membrane as a helical span at residues 991 to 1011 (FFLLILMIFSKLLKHSVIVAI). In terms of domain architecture, ABC transmembrane type-1 2 spans 994-1274 (LILMIFSKLL…VVRNLADLEV (281 aa)). At 1012 to 1034 (DYWLATWTSEYSINNTGKADQTY) the chain is on the extracellular side. The chain crosses the membrane as a helical span at residues 1035–1055 (YVAGFSILCGAGIFLCLVTSL). Topologically, residues 1056 to 1127 (TVEWMGLTAA…TLLCLSAIGM (72 aa)) are cytoplasmic. The helical transmembrane segment at 1128–1148 (ISYATPVFLVALLPLGVAFYF) threads the bilayer. The Extracellular segment spans residues 1149-1245 (IQKYFRVASK…IASISGSSNS (97 aa)). Residues 1246 to 1266 (GLVGLGLLYALTITNYLNWVV) traverse the membrane as a helical segment. The Cytoplasmic segment spans residues 1267–1549 (RNLADLEVQM…LFSTLVMTNK (283 aa)). In terms of domain architecture, ABC transporter 2 spans 1312-1546 (IKIHDLCVRY…KNGLFSTLVM (235 aa)). 1346–1353 (GRTGSGKS) lines the ATP pocket.

Belongs to the ABC transporter superfamily. ABCC family. Conjugate transporter (TC 3.A.1.208) subfamily. In terms of assembly, interacts with KCNJ11. Interacts with KCNJ8.

It localises to the membrane. Its function is as follows. Subunit of ATP-sensitive potassium channels (KATP). Can form cardiac and smooth muscle-type KATP channels with KCNJ11. KCNJ11 forms the channel pore while ABCC9 is required for activation and regulation. Can form a sulfonylurea-sensitive but ATP-insensitive potassium channel with KCNJ8. This Homo sapiens (Human) protein is ATP-binding cassette sub-family C member 9 (ABCC9).